We begin with the raw amino-acid sequence, 445 residues long: Homogentisate 1,2-dioxygenase (445 aa).

Lys98 is subject to N6-acetyllysine. Fe cation is bound by residues His335, Glu341, and His371. Residue Lys414 is modified to N6-succinyllysine.

The protein belongs to the homogentisate dioxygenase family. In terms of assembly, homohexamer arranged as a dimer of trimers. Requires Fe cation as cofactor. Highest expression in the prostate, small intestine, colon, kidney and liver.

The catalysed reaction is homogentisate + O2 = 4-maleylacetoacetate + H(+). The protein operates within amino-acid degradation; L-phenylalanine degradation; acetoacetate and fumarate from L-phenylalanine: step 4/6. Functionally, catalyzes the conversion of homogentisate to maleylacetoacetate. In Homo sapiens (Human), this protein is Homogentisate 1,2-dioxygenase (HGD).